Reading from the N-terminus, the 72-residue chain is Translation initiation factor IF-1 (72 aa).

Positions 1–72 (MAKEESIEIE…SKGRITYRYK (72 aa)) constitute an S1-like domain.

It belongs to the IF-1 family. Component of the 30S ribosomal translation pre-initiation complex which assembles on the 30S ribosome in the order IF-2 and IF-3, IF-1 and N-formylmethionyl-tRNA(fMet); mRNA recruitment can occur at any time during PIC assembly.

It localises to the cytoplasm. One of the essential components for the initiation of protein synthesis. Stabilizes the binding of IF-2 and IF-3 on the 30S subunit to which N-formylmethionyl-tRNA(fMet) subsequently binds. Helps modulate mRNA selection, yielding the 30S pre-initiation complex (PIC). Upon addition of the 50S ribosomal subunit IF-1, IF-2 and IF-3 are released leaving the mature 70S translation initiation complex. The protein is Translation initiation factor IF-1 of Chlorobium phaeovibrioides (strain DSM 265 / 1930) (Prosthecochloris vibrioformis (strain DSM 265)).